Reading from the N-terminus, the 258-residue chain is Phosphonates import ATP-binding protein PhnC 3 (258 aa).

Residues 2 to 246 (IEFKNVSLVY…TFEEIYGRKI (245 aa)) form the ABC transporter domain. 35–42 (GLSGAGKS) contacts ATP.

It belongs to the ABC transporter superfamily. Phosphonates importer (TC 3.A.1.9.1) family. As to quaternary structure, the complex is composed of two ATP-binding proteins (PhnC), two transmembrane proteins (PhnE) and a solute-binding protein (PhnD).

Its subcellular location is the cell membrane. It catalyses the reaction phosphonate(out) + ATP + H2O = phosphonate(in) + ADP + phosphate + H(+). Functionally, part of the ABC transporter complex PhnCDE involved in phosphonates import. Responsible for energy coupling to the transport system. This chain is Phosphonates import ATP-binding protein PhnC 3, found in Halalkalibacterium halodurans (strain ATCC BAA-125 / DSM 18197 / FERM 7344 / JCM 9153 / C-125) (Bacillus halodurans).